A 702-amino-acid chain; its full sequence is Heparin-sulfate lyase (702 aa).

Residues 1–17 (MKNIFFICFCALFAFSG) form the signal peptide. Tyrosine 314 (proton acceptor) is an active-site residue.

It belongs to the polysaccharide lyase 12 family.

Its subcellular location is the periplasm. The enzyme catalyses Elimination of sulfate, appears to act on linkages between N-acetyl-D-glucosamine and uronate. Product is an unsaturated sugar.. Functionally, specifically cleaves heparan sulfate-rich regions of acidic polysaccharides. Does not act on N,O-desulfated glucosamine or N-acetyl-O-sulfated glucosamine linkages. Functions in cleaving metazoan heparan sulfate and providing carbon, nitrogen and sulfate sources for microorganisms. The chain is Heparin-sulfate lyase (hepC) from Bacteroides thetaiotaomicron (strain ATCC 29148 / DSM 2079 / JCM 5827 / CCUG 10774 / NCTC 10582 / VPI-5482 / E50).